The primary structure comprises 332 residues: Glyceraldehyde-3-phosphate dehydrogenase 1 (332 aa).

NAD(+) contacts are provided by R11, I12, D33, and T120. D-glyceraldehyde 3-phosphate is bound by residues 149–151, T180, 209–210, and R232; these read SCT and TG. The active-site Nucleophile is C150. Residues N314 and Y318 each coordinate NAD(+).

This sequence belongs to the glyceraldehyde-3-phosphate dehydrogenase family. In terms of assembly, homotetramer.

The protein resides in the cytoplasm. The enzyme catalyses D-glyceraldehyde 3-phosphate + phosphate + NAD(+) = (2R)-3-phospho-glyceroyl phosphate + NADH + H(+). It carries out the reaction NADH + H2O = (6R)-NADHX. The catalysed reaction is NADH + H2O = (6S)-NADHX. It catalyses the reaction NADPH + H2O = (6R)-NADPHX. The enzyme catalyses NADPH + H2O = (6S)-NADPHX. Its pathway is carbohydrate degradation; glycolysis; pyruvate from D-glyceraldehyde 3-phosphate: step 1/5. In terms of biological role, glyceraldehyde-3-phosphate dehydrogenase (GAPDH) involved in glycolysis and gluconeogenesis. Catalyzes the reaction of glyceraldehyde-3-phosphate to 1,3 bis-phosphoglycerate. The contribution of the TDH1, TDH2, and TDH3 to the total glyceraldehyde-3-phosphate dehydrogenase activity is 10-15, 25-30, and 50-60%, respectively. May be involved in a process other than glycolysis because it is synthesized by cells in stationary phase. Functionally, as a side activity, catalyzes the hydration of the nicotinamide ring of NADH or NADPH at the C6 position to give the corresponding hydrates, NADHX and NADPHX, which exist as R and S epimers, that cannot act as electron donors or acceptors and inhibit several dehydrogenases, making them toxic. The protein is Glyceraldehyde-3-phosphate dehydrogenase 1 of Saccharomyces cerevisiae (strain ATCC 204508 / S288c) (Baker's yeast).